The chain runs to 123 residues: Large ribosomal subunit protein uL14 (123 aa).

This sequence belongs to the universal ribosomal protein uL14 family. In terms of assembly, part of the 50S ribosomal subunit. Forms a cluster with proteins L3 and L19. In the 70S ribosome, L14 and L19 interact and together make contacts with the 16S rRNA in bridges B5 and B8.

Its function is as follows. Binds to 23S rRNA. Forms part of two intersubunit bridges in the 70S ribosome. This is Large ribosomal subunit protein uL14 from Citrobacter koseri (strain ATCC BAA-895 / CDC 4225-83 / SGSC4696).